A 104-amino-acid chain; its full sequence is Fusaric acid biosynthesis protein 2 (104 aa).

It belongs to the YciI family.

It functions in the pathway mycotoxin biosynthesis. Part of the gene cluster that mediates the biosynthesis of fusaric acid, a mycotoxin with low to moderate toxicity to animals and humans, but with high phytotoxic properties. L-aspartate is suggested as fusaric acid amino acid precursor that is activated and further processed to O-acetyl-L-homoserine by cluster enzymes aspartate kinase FUB3 and homoserine O-acetyltransferase FUB5, as well as enzymes of the primary metabolism. The polyketide synthase (PKS) FUB1 generates the triketide trans-2-hexenal which is presumptively released by the hydrolase FUB4 and linked to the NRPS-bound amino acid precursor by NAD(P)-dependent dehydrogenase FUB6. FUB1, FUB4, and the non-canonical NRPS Fub8 may form an enzyme complex. Further processing of the NRPS-bound intermediate might be carried out by FUB6 and the sulfhydrylase FUB7, enabling a spontaneous electrocyclization to close the carbon backbone of fusaric acid. Dihydrofusaric acid is likely to be released via reduction by the thioester reductase (TR) domain of FUB8 whereupon the final oxidation to fusaric acid may (also) be performed by the FMN-dependent dehydrogenase FUB9. The sequence is that of Fusaric acid biosynthesis protein 2 from Gibberella moniliformis (strain M3125 / FGSC 7600) (Maize ear and stalk rot fungus).